The primary structure comprises 428 residues: Tubby-like F-box protein 5 (428 aa).

The disordered stretch occupies residues I17 to Q65. Positions Q47–Q65 are enriched in low complexity. The F-box domain occupies Q65–L117.

This sequence belongs to the TUB family. As to expression, ubiquitous.

The sequence is that of Tubby-like F-box protein 5 (TULP5) from Oryza sativa subsp. japonica (Rice).